A 464-amino-acid chain; its full sequence is Soluble pyridine nucleotide transhydrogenase (464 aa).

35-44 contributes to the FAD binding site; sequence DSRRVVGGNC.

This sequence belongs to the class-I pyridine nucleotide-disulfide oxidoreductase family. It depends on FAD as a cofactor.

It is found in the cytoplasm. The catalysed reaction is NAD(+) + NADPH = NADH + NADP(+). Functionally, conversion of NADPH, generated by peripheral catabolic pathways, to NADH, which can enter the respiratory chain for energy generation. The protein is Soluble pyridine nucleotide transhydrogenase of Pseudomonas paraeruginosa (strain DSM 24068 / PA7) (Pseudomonas aeruginosa (strain PA7)).